A 474-amino-acid chain; its full sequence is Semenogelin-2 (474 aa).

The first 23 residues, 1-23 (MKSIILFVLSLLLILEKQAAVMG), serve as a signal peptide directing secretion. 5 disordered regions span residues 24–62 (QKGG…SKGS), 132–158 (GGQA…LSSQ), 173–194 (KEQA…QSSY), 226–247 (VREE…DRLQ), and 272–474 (NLNQ…SSTE). Composition is skewed to polar residues over residues 31–40 (QLPSGSSQFP), 137–158 (RGTQ…LSSQ), and 174–194 (EQAS…QSSY). Residues 292–310 (RTEERQLNHGEKSVQKDVS) show a composition bias toward basic and acidic residues. Residues 325-334 (KSQNQVTIHS) are compositionally biased toward polar residues. Residues 335–346 (QDQEHGHKENKM) show a composition bias toward basic and acidic residues. Over residues 372–397 (GSISIQTEEQIHGKSQNQVRIPSQAQ) the composition is skewed to polar residues. A compositionally biased stretch (basic and acidic residues) spans 399-426 (YGHKENKISYRSSSTEERRLNSGEKDVQ). A compositionally biased stretch (polar residues) spans 445–455 (KSQNQVTIPSQ). A compositionally biased stretch (basic and acidic residues) spans 456 to 465 (DQEHGHKENK).

This sequence belongs to the semenogelin family. As to quaternary structure, interacts with SERPINA5.

It is found in the secreted. In terms of biological role, participates in the formation of a gel matrix (sperm coagulum) entrapping the accessory gland secretions and ejaculated spermatozoa. The protein is Semenogelin-2 (SEMG2) of Gorilla gorilla gorilla (Western lowland gorilla).